The sequence spans 1391 residues: Nuclear pore complex protein Nup155 (1391 aa).

O-linked (GlcNAc) serine glycosylation is present at serine 526. 2 disordered regions span residues 604–630 (SSSP…AQPP) and 985–1012 (QSKA…NMLS). The residue at position 1057 (serine 1057) is a Phosphoserine.

This sequence belongs to the non-repetitive/WGA-negative nucleoporin family. In terms of assembly, interacts with GLE1 and NUP35/NUP53. Able to form a heterotrimer with GLE1 and NUP42 in vitro. Forms a complex with NUP35, NUP93, NUP205 and lamin B. Phosphorylated. Phosphorylation and dephosphorylation may be important for the function of NUP155 and may play a role in the reversible disassembly of the nuclear pore complex during mitosis. In terms of processing, disulfide-linked to NUP62. The inner channel of the NPC has a different redox environment from the cytoplasm and allows the formation of interchain disulfide bonds between some nucleoporins, the significant increase of these linkages upon oxidative stress reduces the permeability of the NPC.

Its subcellular location is the nucleus. It is found in the nuclear pore complex. The protein localises to the nucleus membrane. Its function is as follows. Essential component of nuclear pore complex. Could be essessential for embryogenesis. Nucleoporins may be involved both in binding and translocating proteins during nucleocytoplasmic transport. This Mus musculus (Mouse) protein is Nuclear pore complex protein Nup155 (Nup155).